A 596-amino-acid polypeptide reads, in one-letter code: Ulvan-active sulfatase (596 aa).

An N-terminal signal peptide occupies residues methionine 1–cysteine 27. Residues glutamate 58, aspartate 59, cysteine 97, aspartate 306, and histidine 307 each coordinate Ca(2+). Cysteine 97 functions as the Nucleophile in the catalytic mechanism. Residue cysteine 97 is modified to 3-oxoalanine (Cys).

It belongs to the sulfatase family. Ca(2+) is required as a cofactor. The conversion to 3-oxoalanine (also known as C-formylglycine, FGly), of a serine or cysteine residue in prokaryotes and of a cysteine residue in eukaryotes, is critical for catalytic activity.

The protein localises to the periplasm. In terms of biological role, sulfatase involved in ulvan degradation. Ulvan is the main polysaccharide component of the Ulvales (green seaweed) cell wall. It is composed of disaccharide building blocks comprising 3-sulfated rhamnose (Rha3S) linked to D-glucuronic acid (GlcA), L-iduronic acid (IduA), or D-xylose (Xyl). The sulfatase desulfates Xyl2S-Rha3S, product of the degradation of ulvan by endo-acting alpha-1,4-L-rhamnosidase, to Xyl-Rha3S. The sequence is that of Ulvan-active sulfatase from Formosa agariphila (strain DSM 15362 / KCTC 12365 / LMG 23005 / KMM 3901 / M-2Alg 35-1).